The primary structure comprises 249 residues: 2,3-bisphosphoglycerate-dependent phosphoglycerate mutase 2 (249 aa).

Residues 8-15 (RHGESIWN), 21-22 (TG), Arg60, 87-90 (ERHY), Lys98, 114-115 (RR), and 183-184 (GN) contribute to the substrate site. Residue His9 is the Tele-phosphohistidine intermediate of the active site. Glu87 acts as the Proton donor/acceptor in catalysis.

Belongs to the phosphoglycerate mutase family. BPG-dependent PGAM subfamily. In terms of assembly, homodimer.

It catalyses the reaction (2R)-2-phosphoglycerate = (2R)-3-phosphoglycerate. It functions in the pathway carbohydrate degradation; glycolysis; pyruvate from D-glyceraldehyde 3-phosphate: step 3/5. Catalyzes the interconversion of 2-phosphoglycerate and 3-phosphoglycerate. In Nitrosomonas europaea (strain ATCC 19718 / CIP 103999 / KCTC 2705 / NBRC 14298), this protein is 2,3-bisphosphoglycerate-dependent phosphoglycerate mutase 2.